A 185-amino-acid polypeptide reads, in one-letter code: Large ribosomal subunit protein uL5 (185 aa).

The protein belongs to the universal ribosomal protein uL5 family. Part of the 50S ribosomal subunit; part of the 5S rRNA/L5/L18/L25 subcomplex. Contacts the 5S rRNA and the P site tRNA. Forms a bridge to the 30S subunit in the 70S ribosome.

In terms of biological role, this is one of the proteins that bind and probably mediate the attachment of the 5S RNA into the large ribosomal subunit, where it forms part of the central protuberance. In the 70S ribosome it contacts protein S13 of the 30S subunit (bridge B1b), connecting the 2 subunits; this bridge is implicated in subunit movement. Contacts the P site tRNA; the 5S rRNA and some of its associated proteins might help stabilize positioning of ribosome-bound tRNAs. The sequence is that of Large ribosomal subunit protein uL5 from Chelativorans sp. (strain BNC1).